A 526-amino-acid chain; its full sequence is Bifunctional purine biosynthesis protein PurH (526 aa).

Positions 1–147 constitute an MGS-like domain; it reads MPSIKRALIS…KNWKHVAIVT (147 aa).

Belongs to the PurH family.

It carries out the reaction (6R)-10-formyltetrahydrofolate + 5-amino-1-(5-phospho-beta-D-ribosyl)imidazole-4-carboxamide = 5-formamido-1-(5-phospho-D-ribosyl)imidazole-4-carboxamide + (6S)-5,6,7,8-tetrahydrofolate. The enzyme catalyses IMP + H2O = 5-formamido-1-(5-phospho-D-ribosyl)imidazole-4-carboxamide. Its pathway is purine metabolism; IMP biosynthesis via de novo pathway; 5-formamido-1-(5-phospho-D-ribosyl)imidazole-4-carboxamide from 5-amino-1-(5-phospho-D-ribosyl)imidazole-4-carboxamide (10-formyl THF route): step 1/1. It functions in the pathway purine metabolism; IMP biosynthesis via de novo pathway; IMP from 5-formamido-1-(5-phospho-D-ribosyl)imidazole-4-carboxamide: step 1/1. This is Bifunctional purine biosynthesis protein PurH from Neisseria meningitidis serogroup C / serotype 2a (strain ATCC 700532 / DSM 15464 / FAM18).